The sequence spans 239 residues: 2-C-methyl-D-erythritol 4-phosphate cytidylyltransferase (239 aa).

It belongs to the IspD/TarI cytidylyltransferase family. IspD subfamily.

The enzyme catalyses 2-C-methyl-D-erythritol 4-phosphate + CTP + H(+) = 4-CDP-2-C-methyl-D-erythritol + diphosphate. Its pathway is isoprenoid biosynthesis; isopentenyl diphosphate biosynthesis via DXP pathway; isopentenyl diphosphate from 1-deoxy-D-xylulose 5-phosphate: step 2/6. Its function is as follows. Catalyzes the formation of 4-diphosphocytidyl-2-C-methyl-D-erythritol from CTP and 2-C-methyl-D-erythritol 4-phosphate (MEP). The polypeptide is 2-C-methyl-D-erythritol 4-phosphate cytidylyltransferase (Acinetobacter baylyi (strain ATCC 33305 / BD413 / ADP1)).